Here is an 85-residue protein sequence, read N- to C-terminus: YcgL domain-containing protein PC1_1941 (85 aa).

Residues Met1 to Val85 enclose the YcgL domain.

This Pectobacterium carotovorum subsp. carotovorum (strain PC1) protein is YcgL domain-containing protein PC1_1941.